The following is an 879-amino-acid chain: DNA mismatch repair protein MutS (879 aa).

639 to 646 provides a ligand contact to ATP; it reads GPNMGGKS.

The protein belongs to the DNA mismatch repair MutS family.

This protein is involved in the repair of mismatches in DNA. It is possible that it carries out the mismatch recognition step. This protein has a weak ATPase activity. The chain is DNA mismatch repair protein MutS from Aromatoleum aromaticum (strain DSM 19018 / LMG 30748 / EbN1) (Azoarcus sp. (strain EbN1)).